Reading from the N-terminus, the 448-residue chain is B box and SPRY domain-containing protein (448 aa).

Low complexity predominate over residues 1–18 (MSSDVSGTESGSESGPES). Positions 1-58 (MSSDVSGTESGSESGPESVPEPVPEPGPEPESEPGPGPAPGPGPGPAPGPGPGLGREP) are disordered. Residues 19–51 (VPEPVPEPGPEPESEPGPGPAPGPGPGPAPGPG) are compositionally biased toward pro residues. The B box-type zinc finger occupies 63–111 (QPCQLCPEHGKPLSWFCLSERRPVCATCAGFGGRCHRHRIRRAEEHAEE). The 192-residue stretch at 257–448 (SPLLTQLWAT…VADQVISIVC (192 aa)) folds into the B30.2/SPRY domain.

Interacts with TRPV5 and TRPV6. Interacts with YWHAZ/14-3-3 protein zeta. Predominantly expressed in testis. Expressed in brain at low levels.

It localises to the cytoplasm. The protein resides in the membrane. Its function is as follows. May regulate epithelial calcium transport by inhibiting TRPV5 activity. This chain is B box and SPRY domain-containing protein (Bspry), found in Rattus norvegicus (Rat).